The following is a 190-amino-acid chain: Peptidyl-tRNA hydrolase (190 aa).

Residue Phe14 participates in tRNA binding. His19 serves as the catalytic Proton acceptor. TRNA is bound by residues Met64, Asn66, and Asn112.

It belongs to the PTH family. Monomer.

It localises to the cytoplasm. The catalysed reaction is an N-acyl-L-alpha-aminoacyl-tRNA + H2O = an N-acyl-L-amino acid + a tRNA + H(+). Hydrolyzes ribosome-free peptidyl-tRNAs (with 1 or more amino acids incorporated), which drop off the ribosome during protein synthesis, or as a result of ribosome stalling. Its function is as follows. Catalyzes the release of premature peptidyl moieties from peptidyl-tRNA molecules trapped in stalled 50S ribosomal subunits, and thus maintains levels of free tRNAs and 50S ribosomes. The chain is Peptidyl-tRNA hydrolase from Staphylococcus aureus (strain bovine RF122 / ET3-1).